A 324-amino-acid polypeptide reads, in one-letter code: Glyoxylate/hydroxypyruvate reductase B (324 aa).

Catalysis depends on residues R237 and E266. The active-site Proton donor is H285.

It belongs to the D-isomer specific 2-hydroxyacid dehydrogenase family. GhrB subfamily. Homodimer.

It localises to the cytoplasm. It catalyses the reaction glycolate + NADP(+) = glyoxylate + NADPH + H(+). It carries out the reaction (R)-glycerate + NAD(+) = 3-hydroxypyruvate + NADH + H(+). The catalysed reaction is (R)-glycerate + NADP(+) = 3-hydroxypyruvate + NADPH + H(+). In terms of biological role, catalyzes the NADPH-dependent reduction of glyoxylate and hydroxypyruvate into glycolate and glycerate, respectively. This chain is Glyoxylate/hydroxypyruvate reductase B, found in Escherichia coli O6:H1 (strain CFT073 / ATCC 700928 / UPEC).